A 784-amino-acid chain; its full sequence is Kinesin-like protein 6 (784 aa).

The Kinesin motor domain occupies 6 to 389; sequence SISVAVRVRP…LKYGNRAKNI (384 aa). 134–141 serves as a coordination point for ATP; sequence GATGCGKT. Coiled coils occupy residues 405–440 and 463–483; these read SEYVRTIYELRQKVSILQKRIAEESKQLALNKEVRK and RDLQKSLIEHVRTLRRIEDEI. Residues 677 to 715 are disordered; that stretch reads SEVPTTSSVPPVEIKNKDSKPKVEKSLDKHNMNNDRSFL. A compositionally biased stretch (basic and acidic residues) spans 690–709; sequence IKNKDSKPKVEKSLDKHNMN.

It belongs to the TRAFAC class myosin-kinesin ATPase superfamily. Kinesin family. Kinesin II subfamily. As to quaternary structure, heterodimer with klp5.

The protein resides in the cytoplasm. Its subcellular location is the cytoskeleton. It localises to the chromosome. It is found in the centromere. The protein localises to the kinetochore. The protein resides in the spindle. Its function is as follows. Has a role in establishing metaphase during mitosis. Required for chromosome segregation where it generates tension during kinetochore capturing. In Schizosaccharomyces pombe (strain 972 / ATCC 24843) (Fission yeast), this protein is Kinesin-like protein 6 (klp6).